A 72-amino-acid polypeptide reads, in one-letter code: UPF0352 protein HI_0840 (72 aa).

The protein belongs to the UPF0352 family.

The polypeptide is UPF0352 protein HI_0840 (Haemophilus influenzae (strain ATCC 51907 / DSM 11121 / KW20 / Rd)).